The chain runs to 421 residues: General transcription factor IIH subunit 2 (421 aa).

The disordered stretch occupies residues 1-26 (MSNQRKRSNDEREEEDDEDAEGIGEW). The span at 11–24 (EREEEDDEDAEGIG) shows a compositional bias: acidic residues. Residues 83-272 (YLYIVIDFSR…IAEFAIANLI (190 aa)) form the VWFA domain. An RING-type zinc finger spans residues 362 to 408 (CFGCQQSLIGAGNKPVPCVTCRKCKHYFCLDCDIYIHESLHNCPGCE).

The protein belongs to the GTF2H2 family. As to quaternary structure, component of the 7-subunit TFIIH core complex composed of XPB, XPD, TFB1/GTF2H1, GTF2H2/P44, TFB4/GTF2H3, TFB2/GTF2H4 and TFB5/GTF2H5, which is active in NER. The core complex associates with the 3-subunit CDK-activating kinase (CAK) module composed of CYCH1/cyclin H1, CDKD and MAT1/At4g30820 to form the 10-subunit holoenzyme (holo-TFIIH) active in transcription. Interacts with XPD.

The protein localises to the nucleus. Functionally, component of the general transcription and DNA repair factor IIH (TFIIH) core complex, which is involved in general and transcription-coupled nucleotide excision repair (NER) of damaged DNA and, when complexed to CAK, in RNA transcription by RNA polymerase II. In NER, TFIIH acts by opening DNA around the lesion to allow the excision of the damaged oligonucleotide and its replacement by a new DNA fragment. In transcription, TFIIH has an essential role in transcription initiation. When the pre-initiation complex (PIC) has been established, TFIIH is required for promoter opening and promoter escape. Phosphorylation of the C-terminal tail (CTD) of the largest subunit of RNA polymerase II by the kinase module CAK controls the initiation of transcription. Can restore UV resistance in the NER-deficient ssl1-1 yeast mutant. This is General transcription factor IIH subunit 2 from Arabidopsis thaliana (Mouse-ear cress).